Reading from the N-terminus, the 157-residue chain is Nascent polypeptide-associated complex subunit beta-1 (157 aa).

Disordered stretches follow at residues 19 to 42 (KVGG…KDDT) and 126 to 157 (EKHE…ADVE). The 66-residue stretch at 38-103 (NKDDTKLQSQ…PQEKNLQDLF (66 aa)) folds into the NAC-A/B domain. Positions 126–142 (EKHEAKAPADAEKKDEA) are enriched in basic and acidic residues. Thr-151 is modified (phosphothreonine).

Belongs to the NAC-beta family. As to quaternary structure, part of the nascent polypeptide-associated complex (NAC), consisting of EGD2 and either EGD1 or BTT1. NAC associates with ribosomes via EGD1 or BTT1, and with the CCR4-NOT complex.

It is found in the cytoplasm. It localises to the nucleus. Its function is as follows. Component of the nascent polypeptide-associated complex (NAC), a dynamic component of the ribosomal exit tunnel, protecting the emerging polypeptides from interaction with other cytoplasmic proteins to ensure appropriate nascent protein targeting. The NAC complex also promotes mitochondrial protein import by enhancing productive ribosome interactions with the outer mitochondrial membrane and blocks the inappropriate interaction of ribosomes translating non-secretory nascent polypeptides with translocation sites in the membrane of the endoplasmic reticulum. EGD1 may act as a transcription factor that exert a negative effect on the expression of several genes that are transcribed by RNA polymerase II. The sequence is that of Nascent polypeptide-associated complex subunit beta-1 (EGD1) from Saccharomyces cerevisiae (strain YJM789) (Baker's yeast).